Reading from the N-terminus, the 373-residue chain is Probable tRNA sulfurtransferase (373 aa).

The THUMP domain maps to 54 to 158 (NKNIEELSKV…NDVAYFYYKI (105 aa)). ATP is bound by residues 176–177 (LF), 201–202 (NF), Lys-256, Gly-278, and Gln-287.

This sequence belongs to the ThiI family.

The protein localises to the cytoplasm. The enzyme catalyses [ThiI sulfur-carrier protein]-S-sulfanyl-L-cysteine + a uridine in tRNA + 2 reduced [2Fe-2S]-[ferredoxin] + ATP + H(+) = [ThiI sulfur-carrier protein]-L-cysteine + a 4-thiouridine in tRNA + 2 oxidized [2Fe-2S]-[ferredoxin] + AMP + diphosphate. It carries out the reaction [ThiS sulfur-carrier protein]-C-terminal Gly-Gly-AMP + S-sulfanyl-L-cysteinyl-[cysteine desulfurase] + AH2 = [ThiS sulfur-carrier protein]-C-terminal-Gly-aminoethanethioate + L-cysteinyl-[cysteine desulfurase] + A + AMP + 2 H(+). Its pathway is cofactor biosynthesis; thiamine diphosphate biosynthesis. In terms of biological role, catalyzes the ATP-dependent transfer of a sulfur to tRNA to produce 4-thiouridine in position 8 of tRNAs, which functions as a near-UV photosensor. Also catalyzes the transfer of sulfur to the sulfur carrier protein ThiS, forming ThiS-thiocarboxylate. This is a step in the synthesis of thiazole, in the thiamine biosynthesis pathway. The sulfur is donated as persulfide by IscS. In Saccharolobus islandicus (strain L.S.2.15 / Lassen #1) (Sulfolobus islandicus), this protein is Probable tRNA sulfurtransferase.